A 192-amino-acid chain; its full sequence is T-cell surface glycoprotein CD3 epsilon chain (192 aa).

Residues 1-21 form the signal peptide; sequence MQSGNLWRALGLCLLLVGAWA. Residues 23 to 114 are Extracellular-facing; sequence DADEQKPYEV…QNCMEVNLME (92 aa). The Ig-like domain occupies 26 to 97; sequence EQKPYEVSIS…EGNKEAAHTL (72 aa). The cysteines at positions 43 and 84 are disulfide-linked. The N-linked (GlcNAc...) asparagine glycan is linked to asparagine 72. Residues 115–135 form a helical membrane-spanning segment; the sequence is VATIIVVDICVTLGLLLLVYY. Over 136–192 the chain is Cytoplasmic; the sequence is WSKSRKAKASPMTRGAGAGGRPRGQNKGRPPPVPNPDYEPIRKGQRDLYAGLNQRGV. Positions 145-180 are disordered; it reads SPMTRGAGAGGRPRGQNKGRPPPVPNPDYEPIRKGQ. The segment at 160 to 177 is NUMB-binding region; sequence QNKGRPPPVPNPDYEPIR. Residues 163–190 form the ITAM domain; that stretch reads GRPPPVPNPDYEPIRKGQRDLYAGLNQR. The segment at 164-171 is proline-rich sequence; that stretch reads RPPPVPNP. A phosphotyrosine mark is found at tyrosine 173 and tyrosine 184.

The TCR-CD3 complex is composed of a CD3D/CD3E and a CD3G/CD3E heterodimers that preferentially associate with TCRalpha and TCRbeta, respectively, to form TCRalpha/CD3E/CD3G and TCRbeta/CD3G/CD3E trimers. In turn, the hexamer interacts with CD3Z homodimer to form the TCR-CD3 complex. Alternatively, TCRalpha and TCRbeta can be replaced by TCRgamma and TCRdelta. Interacts with CD6. Interacts (via Proline-rich sequence) with NCK1; the interaction is ligand dependent but independent of tyrosine kinase activation. In terms of processing, phosphorylated on Tyr residues after T-cell receptor triggering by LCK in association with CD4/CD8.

It is found in the cell membrane. Its function is as follows. Part of the TCR-CD3 complex present on T-lymphocyte cell surface that plays an essential role in adaptive immune response. When antigen presenting cells (APCs) activate T-cell receptor (TCR), TCR-mediated signals are transmitted across the cell membrane by the CD3 chains CD3D, CD3E, CD3G and CD3Z. All CD3 chains contain immunoreceptor tyrosine-based activation motifs (ITAMs) in their cytoplasmic domain. Upon TCR engagement, these motifs become phosphorylated by Src family protein tyrosine kinases LCK and FYN, resulting in the activation of downstream signaling pathways. In addition of this role of signal transduction in T-cell activation, CD3E plays an essential role in correct T-cell development. Also participates in internalization and cell surface down-regulation of TCR-CD3 complexes via endocytosis sequences present in CD3E cytosolic region. In addition to its role as a TCR coreceptor, it serves as a receptor for ITPRIPL1. Ligand recognition inhibits T-cell activation by promoting interaction with NCK1, which prevents CD3E-ZAP70 interaction and blocks the ERK-NFkB signaling cascade and calcium influx. The chain is T-cell surface glycoprotein CD3 epsilon chain (CD3E) from Bos taurus (Bovine).